The following is a 342-amino-acid chain: Phosphate acyltransferase (342 aa).

Belongs to the PlsX family. As to quaternary structure, homodimer. Probably interacts with PlsY.

Its subcellular location is the cytoplasm. The catalysed reaction is a fatty acyl-[ACP] + phosphate = an acyl phosphate + holo-[ACP]. It participates in lipid metabolism; phospholipid metabolism. Functionally, catalyzes the reversible formation of acyl-phosphate (acyl-PO(4)) from acyl-[acyl-carrier-protein] (acyl-ACP). This enzyme utilizes acyl-ACP as fatty acyl donor, but not acyl-CoA. The protein is Phosphate acyltransferase of Shewanella sediminis (strain HAW-EB3).